Consider the following 196-residue polypeptide: V-type proton ATPase subunit E (196 aa).

Belongs to the V-ATPase E subunit family.

In terms of biological role, produces ATP from ADP in the presence of a proton gradient across the membrane. The chain is V-type proton ATPase subunit E from Clostridium botulinum (strain Eklund 17B / Type B).